The following is a 23-amino-acid chain: Alyteserin-1a (23 aa).

An Asparagine amide modification is found at N23.

In terms of tissue distribution, expressed by the skin glands.

Its subcellular location is the secreted. The protein localises to the target cell membrane. Its function is as follows. Antibacterial peptide with amphipathic alpha-helical structure. Shows selective growth inhibitory activity against the Gram-negative bacteria E.coli (MIC=25 uM) Has a weak hemolytic activity against human erythrocytes (LC(50)&gt;100 uM). Is very weakly active against S.aureus (MIC=200 uM). This is Alyteserin-1a from Alytes obstetricans (Common midwife toad).